The sequence spans 125 residues: Probable mercury resistance operon repressor (125 aa).

In terms of domain architecture, HTH arsR-type spans 15–109 (VPCTHPDTTA…LARCLAADNA (95 aa)). The segment at residues 49 to 68 (SAECVEHAGISQPRVSVHLS) is a DNA-binding region (H-T-H motif). Residues Cys69, Cys73, and Cys114 each coordinate Hg(2+).

In terms of biological role, negatively regulates the mercuric reductase merA and the organolyase merB in the absence of mercuric ions. The sequence is that of Probable mercury resistance operon repressor (merR) from Streptomyces lividans.